Here is a 374-residue protein sequence, read N- to C-terminus: Homeobox protein knotted-1-like 13 (374 aa).

Positions 214-242 are disordered; it reads TGASPGEGTGATMSDGEDDQADSEANMYD. The ELK domain maps to 270 to 290; it reads ELKHELKQGYKEKLIDIREEI. The segment at residues 291-354 is a DNA-binding region (homeobox; TALE-type); that stretch reads LRKRRAGKLP…NQRKRNWHSN (64 aa). The tract at residues 347 to 374 is disordered; it reads RKRNWHSNPSSSTSVKTKRKSNAGDNNS.

This sequence belongs to the TALE/KNOX homeobox family. Isoforms 1 and 2 are expressed in roots, stems, shoot meristem, leaf blades, leaf sheaths and flowers. Isoform 3 is expressed in stems, shoot meristem, rachis, leaf blades and leaf sheaths.

The protein localises to the nucleus. Isoform 3 acts as a transcription activator, but isoforms 1 and 2 do not. This is Homeobox protein knotted-1-like 13 (OSH45) from Oryza sativa subsp. japonica (Rice).